Consider the following 459-residue polypeptide: Cysteine--tRNA ligase (459 aa).

C28 is a binding site for Zn(2+). The 'HIGH' region motif lies at 30 to 40 (VTVYDLCHIGH). Residues C209, H234, and E238 each coordinate Zn(2+). The 'KMSKS' region motif lies at 266–270 (KMSKS). An ATP-binding site is contributed by K269.

This sequence belongs to the class-I aminoacyl-tRNA synthetase family. Monomer. Zn(2+) serves as cofactor.

It localises to the cytoplasm. It carries out the reaction tRNA(Cys) + L-cysteine + ATP = L-cysteinyl-tRNA(Cys) + AMP + diphosphate. In Shewanella oneidensis (strain ATCC 700550 / JCM 31522 / CIP 106686 / LMG 19005 / NCIMB 14063 / MR-1), this protein is Cysteine--tRNA ligase.